The following is a 123-amino-acid chain: MSKEEIIQAIKGMSVLELNELVKACEEEFGVSAAAPVAVAGGAAAGGGDAAEEKTEFDVVLKASGSEKIKVIKAVREVTGLGLKEAKALVDGAPKPLKEAVSKEDAEAIKAKFEEIGAEIELK.

This sequence belongs to the bacterial ribosomal protein bL12 family. In terms of assembly, homodimer. Part of the ribosomal stalk of the 50S ribosomal subunit. Forms a multimeric L10(L12)X complex, where L10 forms an elongated spine to which 2 to 4 L12 dimers bind in a sequential fashion. Binds GTP-bound translation factors.

In terms of biological role, forms part of the ribosomal stalk which helps the ribosome interact with GTP-bound translation factors. Is thus essential for accurate translation. The sequence is that of Large ribosomal subunit protein bL12 from Clostridium kluyveri (strain NBRC 12016).